A 310-amino-acid chain; its full sequence is Cytochrome f (310 aa).

A signal peptide spans 1 to 27 (MRRILTFFLGSIIIGLSIIISPSSSFA). Heme-binding residues include tyrosine 28, cysteine 48, cysteine 51, and histidine 52. Residues 277 to 297 (VIGLIAFFAGVALTQILLVLK) traverse the membrane as a helical segment.

The protein belongs to the cytochrome f family. As to quaternary structure, the 4 large subunits of the cytochrome b6-f complex are cytochrome b6, subunit IV (17 kDa polypeptide, PetD), cytochrome f and the Rieske protein, while the 4 small subunits are PetG, PetL, PetM and PetN. The complex functions as a dimer. Requires heme as cofactor.

It is found in the cellular thylakoid membrane. Component of the cytochrome b6-f complex, which mediates electron transfer between photosystem II (PSII) and photosystem I (PSI), cyclic electron flow around PSI, and state transitions. This is Cytochrome f from Prochlorococcus marinus (strain SARG / CCMP1375 / SS120).